Consider the following 242-residue polypeptide: uncharacterized protein (242 aa).

Positions 3 to 116 constitute a Response regulatory domain; it reads TALVIDDEQF…RLNKTVKRLN (114 aa). The residue at position 54 (aspartate 54) is a 4-aspartylphosphate. The 102-residue stretch at 139–240 folds into the HTH LytTR-type domain; the sequence is IPCIGHNRIV…LKVLKEMLGI (102 aa).

This is an uncharacterized protein from Vibrio parahaemolyticus serotype O3:K6 (strain RIMD 2210633).